The following is a 272-amino-acid chain: MKTIVLKLGGEIVHSPELDLVARDLRTLVDGWNRVAIVHGGGPQATALQKRLGLETRMVAGRRFTDEATLEVMKYVVAGRLNVDLCGRLLANGVMPVGLHGASGHAIQATRRPPRVMQGAGPEPVDLGLVGDVVGFNLPLLGDLFERRYVPVLACLGCDDAGQALNINGDTVASQLAGALRADALVLVTSTPGVLRDVKDPSSRIPRITRAEFERLVADGTISGGMIPKLEESFEVLRGGARSVVILGKLAPGDLEAALLEPGSAGTVLVAD.

Residues 41–42 (GG), Arg-63, and Asn-166 each bind substrate.

The protein belongs to the acetylglutamate kinase family. ArgB subfamily.

It is found in the cytoplasm. The enzyme catalyses N-acetyl-L-glutamate + ATP = N-acetyl-L-glutamyl 5-phosphate + ADP. It participates in amino-acid biosynthesis; L-arginine biosynthesis; N(2)-acetyl-L-ornithine from L-glutamate: step 2/4. Its function is as follows. Catalyzes the ATP-dependent phosphorylation of N-acetyl-L-glutamate. The sequence is that of Acetylglutamate kinase from Anaeromyxobacter dehalogenans (strain 2CP-1 / ATCC BAA-258).